The following is a 123-amino-acid chain: D-ribose pyranase (123 aa).

The Proton donor role is filled by His-20. Substrate is bound by residues Asp-28, His-90, and 112-114; that span reads YAN.

The protein belongs to the RbsD / FucU family. RbsD subfamily. Homodecamer.

The protein resides in the cytoplasm. It catalyses the reaction beta-D-ribopyranose = beta-D-ribofuranose. It participates in carbohydrate metabolism; D-ribose degradation; D-ribose 5-phosphate from beta-D-ribopyranose: step 1/2. In terms of biological role, catalyzes the interconversion of beta-pyran and beta-furan forms of D-ribose. The sequence is that of D-ribose pyranase from Corynebacterium glutamicum (strain ATCC 13032 / DSM 20300 / JCM 1318 / BCRC 11384 / CCUG 27702 / LMG 3730 / NBRC 12168 / NCIMB 10025 / NRRL B-2784 / 534).